The primary structure comprises 409 residues: 1-deoxy-D-xylulose 5-phosphate reductoisomerase (409 aa).

The NADPH site is built by Thr10, Gly11, Ser12, Ile13, Gly36, Arg37, Asn38, and Asn126. Lys127 is a 1-deoxy-D-xylulose 5-phosphate binding site. Glu128 lines the NADPH pocket. Residue Asp152 coordinates Mn(2+). 4 residues coordinate 1-deoxy-D-xylulose 5-phosphate: Ser153, Glu154, Ser190, and His213. Glu154 lines the Mn(2+) pocket. Gly219 lines the NADPH pocket. 1-deoxy-D-xylulose 5-phosphate is bound by residues Ser226, Asn231, Lys232, and Glu235. Mn(2+) is bound at residue Glu235.

It belongs to the DXR family. Mg(2+) is required as a cofactor. Requires Mn(2+) as cofactor.

It carries out the reaction 2-C-methyl-D-erythritol 4-phosphate + NADP(+) = 1-deoxy-D-xylulose 5-phosphate + NADPH + H(+). The protein operates within isoprenoid biosynthesis; isopentenyl diphosphate biosynthesis via DXP pathway; isopentenyl diphosphate from 1-deoxy-D-xylulose 5-phosphate: step 1/6. Its function is as follows. Catalyzes the NADPH-dependent rearrangement and reduction of 1-deoxy-D-xylulose-5-phosphate (DXP) to 2-C-methyl-D-erythritol 4-phosphate (MEP). In Prochlorococcus marinus (strain MIT 9515), this protein is 1-deoxy-D-xylulose 5-phosphate reductoisomerase.